Reading from the N-terminus, the 233-residue chain is Esterase FUS5 (233 aa).

Catalysis depends on charge relay system residues S105, D159, and H187.

Belongs to the LovG family.

Esterase; part of the gene cluster that mediates the biosynthesis of the mycotoxin fusarin C. Within the cluster, FUS1, FUS2, FUS8 and FUS9 are sufficient for fusarin production. The other FUS cluster members are not essential for fusarin C biosynthesis. This Gibberella fujikuroi (strain CBS 195.34 / IMI 58289 / NRRL A-6831) (Bakanae and foot rot disease fungus) protein is Esterase FUS5.